The chain runs to 436 residues: Protein PhoH2 (436 aa).

Residues 12 to 137 form the PINc domain; that stretch reads RTYVLDTSVL…LVSKDLPMRL (126 aa).

In the N-terminal section; belongs to the PINc/VapC protein family. It in the C-terminal section; belongs to the PhoH family.

The catalysed reaction is n ATP + n H2O + wound RNA = n ADP + n phosphate + unwound RNA.. The enzyme catalyses ATP + H2O = ADP + phosphate + H(+). It carries out the reaction GTP + H2O = GDP + phosphate + H(+). Functionally, unwinds and/or cleaves 5'-tailed RNA in vitro, the reaction is maximal with hydrolyzable ATP; double-stranded (ds)RNA and dsDNA are not unwound. Unlike the protein in mycobacteria there does not seem to be an antitoxin gene upstream, suggesting this is not a toxin-antitoxin system. Has ATPase and GTPase activities. The protein is Protein PhoH2 of Thermobispora bispora (strain ATCC 19993 / DSM 43833 / CBS 139.67 / JCM 10125 / KCTC 9307 / NBRC 14880 / R51).